We begin with the raw amino-acid sequence, 327 residues long: Genome polyprotein (327 aa).

The tract at residues 65 to 102 (IDAVGDNKKDAKPEQGSIQSNPNKGKEKDVNAGTSGTH) is disordered.

Belongs to the potyviridae genome polyprotein family. Post-translationally, genome polyprotein of potyviruses undergoes post-translational proteolytic processing by the main proteinase NIa-pro resulting in the production of at least ten individual proteins. The P1 proteinase and the HC-pro cleave only their respective C-termini autocatalytically. 6K1 is essential for proper proteolytic separation of P3 from CI.

The protein localises to the virion. It catalyses the reaction RNA(n) + a ribonucleoside 5'-triphosphate = RNA(n+1) + diphosphate. In terms of biological role, an RNA-dependent RNA polymerase that plays an essential role in the virus replication. Involved in aphid transmission, cell-to-cell and systemis movement, encapsidation of the viral RNA and in the regulation of viral RNA amplification. The sequence is that of Genome polyprotein from Potato virus Y (strain Chinese) (PVY).